The sequence spans 425 residues: E3 ubiquitin-protein ligase GW2 (425 aa).

Residues 62–105 (CPICFLYYPSLNRSKCCSKGICTECFLQMKPTHTAQPTQCPFCK) form an RING-type; degenerate zinc finger.

Expressed in roots, shoots, leaves, inflorescence meristems, stamens, pistils, spikelet hulls and endosperms 4 days after fertilization.

It is found in the cytoplasm. It carries out the reaction S-ubiquitinyl-[E2 ubiquitin-conjugating enzyme]-L-cysteine + [acceptor protein]-L-lysine = [E2 ubiquitin-conjugating enzyme]-L-cysteine + N(6)-ubiquitinyl-[acceptor protein]-L-lysine.. It participates in protein modification; protein ubiquitination. In terms of biological role, E3 ubiquitin-protein ligase involved in the regulation of grain size. May limit grain width and weight by restricting cell proliferation of the spikelet hull. Possesses E3 ubiquitin-protein ligase activity in vitro. The chain is E3 ubiquitin-protein ligase GW2 from Oryza sativa subsp. indica (Rice).